We begin with the raw amino-acid sequence, 116 residues long: Cell division protein FtsL (116 aa).

At 1-24 the chain is on the cytoplasmic side; sequence MMLTNRQIRVRLFESLKNSFFKKT. Residues 25–45 traverse the membrane as a helical segment; that stretch reads VGISFALLFILLITAFSLIVV. Over 46 to 116 the chain is Periplasmic; that stretch reads RFEYKLQLNE…NEQKEELNNE (71 aa).

This sequence belongs to the FtsL family. Part of a complex composed of FtsB, FtsL and FtsQ.

Its subcellular location is the cell inner membrane. Its function is as follows. Essential cell division protein. May link together the upstream cell division proteins, which are predominantly cytoplasmic, with the downstream cell division proteins, which are predominantly periplasmic. The polypeptide is Cell division protein FtsL (Francisella tularensis subsp. tularensis (strain SCHU S4 / Schu 4)).